The following is a 452-amino-acid chain: Probable hexaprenyl pyrophosphate synthase, mitochondrial (452 aa).

The isopentenyl diphosphate site is built by Lys108, Arg111, and His204. Mg(2+)-binding residues include Asp211 and Asp215. An all-trans-polyprenyl diphosphate is bound at residue Arg220. Position 221 (Arg221) interacts with isopentenyl diphosphate. The an all-trans-polyprenyl diphosphate site is built by Lys303, Thr304, Gln341, and Lys358.

The protein belongs to the FPP/GGPP synthase family. Requires Mg(2+) as cofactor.

The protein localises to the mitochondrion. Its pathway is cofactor biosynthesis; ubiquinone biosynthesis. Its function is as follows. Assembly of polyisoprenoid side chains. The polyprenyl synthase of coenzyme Q biosynthesis catalyzes the formation from isopentenyl diphosphate of all trans-polyprenyl pyrophosphates generally ranging in length of between 6 and 10 isoprene units depending on the species. The protein is Probable hexaprenyl pyrophosphate synthase, mitochondrial (COQ1) of Yarrowia lipolytica (strain CLIB 122 / E 150) (Yeast).